A 236-amino-acid polypeptide reads, in one-letter code: DNA repair protein RecO (236 aa).

This sequence belongs to the RecO family.

In terms of biological role, involved in DNA repair and RecF pathway recombination. The sequence is that of DNA repair protein RecO from Cellvibrio japonicus (strain Ueda107) (Pseudomonas fluorescens subsp. cellulosa).